Consider the following 709-residue polypeptide: Alpha-1,2-mannosyltransferase MNN24 (709 aa).

Residues 1 to 9 (MFSIPVSSK) are Cytoplasmic-facing. A helical membrane pass occupies residues 10–30 (TVRLILVSLLLITLINILAAF). Residues 31 to 709 (QRSTLSSWFP…KNHIEFLEIS (679 aa)) are Extracellular-facing. A glycan (N-linked (GlcNAc...) asparagine) is linked at Asn-317.

The protein belongs to the MNN1/MNT family.

It localises to the golgi apparatus membrane. It functions in the pathway protein modification; protein glycosylation. Alpha-1,2-mannosyltransferase required for cell wall integrity. Responsible for addition of the first alpha-1,2-linked mannose to form the branches on the mannan backbone of oligosaccharides. Addition of alpha-1,2-mannose is required for stabilization of the alpha-1,6-mannose backbone and hence regulates mannan fibril length; and is important for both immune recognition and virulence. This chain is Alpha-1,2-mannosyltransferase MNN24 (MNN24), found in Candida albicans (strain SC5314 / ATCC MYA-2876) (Yeast).